Reading from the N-terminus, the 1420-residue chain is DNA-directed RNA polymerase subunit beta' (1420 aa).

Zn(2+) is bound by residues cysteine 70, cysteine 72, cysteine 85, and cysteine 88. The Mg(2+) site is built by aspartate 464, aspartate 466, and aspartate 468. Residues cysteine 823, cysteine 897, cysteine 904, and cysteine 907 each coordinate Zn(2+).

It belongs to the RNA polymerase beta' chain family. The RNAP catalytic core consists of 2 alpha, 1 beta, 1 beta' and 1 omega subunit. When a sigma factor is associated with the core the holoenzyme is formed, which can initiate transcription. It depends on Mg(2+) as a cofactor. Zn(2+) serves as cofactor.

It catalyses the reaction RNA(n) + a ribonucleoside 5'-triphosphate = RNA(n+1) + diphosphate. DNA-dependent RNA polymerase catalyzes the transcription of DNA into RNA using the four ribonucleoside triphosphates as substrates. The chain is DNA-directed RNA polymerase subunit beta' from Polynucleobacter asymbioticus (strain DSM 18221 / CIP 109841 / QLW-P1DMWA-1) (Polynucleobacter necessarius subsp. asymbioticus).